The following is a 296-amino-acid chain: Probable 6-phosphogluconolactonase 1 (296 aa).

This sequence belongs to the glucosamine/galactosamine-6-phosphate isomerase family. 6-phosphogluconolactonase subfamily.

It carries out the reaction 6-phospho-D-glucono-1,5-lactone + H2O = 6-phospho-D-gluconate + H(+). It functions in the pathway carbohydrate degradation; pentose phosphate pathway; D-ribulose 5-phosphate from D-glucose 6-phosphate (oxidative stage): step 2/3. In terms of biological role, hydrolysis of 6-phosphogluconolactone to 6-phosphogluconate. The chain is Probable 6-phosphogluconolactonase 1 from Oryza sativa subsp. japonica (Rice).